The chain runs to 320 residues: Nicotianamine synthase 2 (320 aa).

Belongs to the nicotianamine synthase (NAS)-like family.

It carries out the reaction 3 S-adenosyl-L-methionine = nicotianamine + 3 S-methyl-5'-thioadenosine + 3 H(+). In terms of biological role, synthesizes nicotianamine, a polyamine which serves as a sensor for the physiological iron status within the plant, and/or might be involved in the transport of iron. This is Nicotianamine synthase 2 (NAS2) from Arabidopsis thaliana (Mouse-ear cress).